A 344-amino-acid polypeptide reads, in one-letter code: Dihydroorotase (344 aa).

Residues H13 and H15 each coordinate Zn(2+). Substrate is bound by residues 15–17 (HLR) and N41. 3 residues coordinate Zn(2+): K99, H136, and H174. K99 bears the N6-carboxylysine mark. Residue H136 participates in substrate binding. L219 contributes to the substrate binding site. D247 provides a ligand contact to Zn(2+). Residue D247 is part of the active site. Residues H251 and A263 each coordinate substrate.

The protein belongs to the metallo-dependent hydrolases superfamily. DHOase family. Class II DHOase subfamily. In terms of assembly, homodimer. Requires Zn(2+) as cofactor.

The catalysed reaction is (S)-dihydroorotate + H2O = N-carbamoyl-L-aspartate + H(+). Its pathway is pyrimidine metabolism; UMP biosynthesis via de novo pathway; (S)-dihydroorotate from bicarbonate: step 3/3. Its function is as follows. Catalyzes the reversible cyclization of carbamoyl aspartate to dihydroorotate. The chain is Dihydroorotase from Idiomarina loihiensis (strain ATCC BAA-735 / DSM 15497 / L2-TR).